A 516-amino-acid chain; its full sequence is MERYKLRQVIGEGASSTVYSGVSARGEEVAVKVVPRKGRSTGMVYREIEMLSTIKHENIVGIVGRFESKKHVYMVEELCDFNLVSFLNEYEVDEDVALKILRMILCGLRHIHSLGIIHRDLKLGNILLKGNTVKICDFGLSCYVEENNSEFCGTMDYLAPEVVDGKKYSFGVDMWSAGVVFYVLLTKKKFCESLDSLECSEELRDLLEKLLERDESKRADASEALMHRSFSRFIPRCEDFRGLPGFERGTKYGVLRKAGDSVELGSIRIDARRGKRHGGGRKHGDLGCLCGEEFTYSVYVDSEEIEPAFITNGQLKTLGLLTAHVKAMREKTPKIIIDDDGNKFYYMFSGGFVYVGKELTLRARGGKYEMSRRSGEKTYLEAVPDFLYEAIGGLEARCKAIDKEVCWFSRESPVLIDCSSHQQFSMSCISQVSEMSIRNRVEYDYIESTGWCIRDGLNFLFLMNDGEMFEVLCPDLAVRYRGRLLFIDDRLPMKLKRSLKGISPFLRSLCDGCYMS.

Residues 4–230 (YKLRQVIGEG…ASEALMHRSF (227 aa)) form the Protein kinase domain. ATP is bound by residues 10–18 (IGEGASSTV) and Lys32. Asp120 serves as the catalytic Proton acceptor.

It belongs to the protein kinase superfamily. CAMK Ser/Thr protein kinase family.

It catalyses the reaction L-seryl-[protein] + ATP = O-phospho-L-seryl-[protein] + ADP + H(+). The catalysed reaction is L-threonyl-[protein] + ATP = O-phospho-L-threonyl-[protein] + ADP + H(+). The protein is Probable serine/threonine-protein kinase ECU02_0550 of Encephalitozoon cuniculi (strain GB-M1) (Microsporidian parasite).